A 74-amino-acid chain; its full sequence is Mitochondrial import receptor subunit TOM6 homolog (74 aa).

Polar residues predominate over residues Met1–Glu16. The segment at Met1 to Asp22 is disordered. Ala2 carries the post-translational modification N-acetylalanine.

Belongs to the Tom6 family. As to quaternary structure, forms part of the preprotein translocase complex of the outer mitochondrial membrane (TOM complex) which consists of at least 7 different proteins (TOMM5, TOMM6, TOMM7, TOMM20, TOMM22, TOMM40 and TOMM70).

It localises to the mitochondrion outer membrane. In Homo sapiens (Human), this protein is Mitochondrial import receptor subunit TOM6 homolog (TOMM6).